Reading from the N-terminus, the 187-residue chain is UPF0301 protein YqgE (187 aa).

It belongs to the UPF0301 (AlgH) family.

The sequence is that of UPF0301 protein YqgE from Shigella boydii serotype 4 (strain Sb227).